The sequence spans 225 residues: Insulin-induced gene 2 protein (225 aa).

At 1–28 (MAEGETESPRPKKCGPYISSVTSQSVNV) the chain is on the cytoplasmic side. A helical membrane pass occupies residues 29-51 (VIRGVVLFFIGVFLALVLNLLQI). Topologically, residues 52-70 (QRNVTLFPPDVITSIFSSA) are lumenal. Residues 71–88 (WWVPPCCGTASAVIGLLY) form a helical membrane-spanning segment. Residues 89–103 (PCIDRHLGEPHKFKR) are Cytoplasmic-facing. The helical transmembrane segment at 104 to 126 (EWSSVMRCVAVFVGINHASAKVD) threads the bilayer. Residues 127 to 129 (FDN) lie on the Lumenal side of the membrane. Residues 130–148 (NFQFSLTLAALSVGLWWTF) traverse the membrane as a helical segment. The Cytoplasmic segment spans residues 149–153 (DRSRS). S151 is modified (phosphoserine). The chain crosses the membrane as a helical span at residues 154–175 (GFGLGVGIAFLATVVTQLLVYN). Topologically, residues 176-189 (GVYQYTSPDFLYVR) are lumenal. Residues 190–207 (SWLPCIFFAGGITMGNIG) form a helical membrane-spanning segment. The Cytoplasmic segment spans residues 208–225 (RQLAMYECKVIAEKSHQE). At C215 the chain carries Cysteine sulfenic acid (-SOH); alternate. A Glycyl cysteine thioester (Cys-Gly) (interchain with G-Cter in ubiquitin); alternate cross-link involves residue C215. A KxHxx motif is present at residues 219 to 225 (AEKSHQE).

It belongs to the INSIG family. As to quaternary structure, interacts with SCAP; interaction is direct and only takes place in the presence of sterols; it prevents interaction between SCAP and the coat protein complex II (COPII). Associates with the SCAP-SREBP complex (composed of SCAP and SREBF1/SREBP1 or SREBF2/SREBP2); association is mediated via its interaction with SCAP and only takes place in the presence of sterols. Interacts with RNF139. Interacts with RNF145. Phosphorylation at Ser-151 by PCK1 reduces binding to oxysterol, disrupting the interaction between INSIG2 and SCAP, thereby promoting nuclear translocation of SREBP proteins (SREBF1/SREBP1 or SREBF2/SREBP2) and subsequent transcription of downstream lipogenesis-related genes. Post-translationally, polyubiquitinated by AMFR/gp78 at Cys-215 in some tissues such as adipose tissues, undifferentiated myoblasts and liver, leading to its degradation. In differentiated myotubes, Cys-215 oxidation prevents ubiquitination at the same site, resulting in protein stabilization. In terms of processing, oxidized at Cys-215 in differentiated myotubes, preventing ubiquitination at the same site, and resulting in protein stabilization. In terms of tissue distribution, expressed in liver, testis, kidney, spleen, intestine, brain and adrenal gland.

It is found in the endoplasmic reticulum membrane. In terms of biological role, oxysterol-binding protein that mediates feedback control of cholesterol synthesis by controlling both endoplasmic reticulum to Golgi transport of SCAP and degradation of HMGCR. Acts as a negative regulator of cholesterol biosynthesis by mediating the retention of the SCAP-SREBP complex in the endoplasmic reticulum, thereby blocking the processing of sterol regulatory element-binding proteins (SREBPs) SREBF1/SREBP1 and SREBF2/SREBP2. Binds oxysterol, including 22-hydroxycholesterol, 24-hydroxycholesterol, 25-hydroxycholesterol and 27-hydroxycholesterol, regulating interaction with SCAP and retention of the SCAP-SREBP complex in the endoplasmic reticulum. In presence of oxysterol, interacts with SCAP, retaining the SCAP-SREBP complex in the endoplasmic reticulum, thereby preventing SCAP from escorting SREBF1/SREBP1 and SREBF2/SREBP2 to the Golgi. Sterol deprivation or phosphorylation by PCK1 reduce oxysterol-binding, disrupting the interaction between INSIG2 and SCAP, thereby promoting Golgi transport of the SCAP-SREBP complex, followed by processing and nuclear translocation of SREBF1/SREBP1 and SREBF2/SREBP2. Also regulates cholesterol synthesis by regulating degradation of HMGCR: initiates the sterol-mediated ubiquitin-mediated endoplasmic reticulum-associated degradation (ERAD) of HMGCR via recruitment of the reductase to the ubiquitin ligase RNF139. In Mus musculus (Mouse), this protein is Insulin-induced gene 2 protein.